We begin with the raw amino-acid sequence, 439 residues long: Casein kinase I homolog 3 (439 aa).

The 272-residue stretch at 15–286 (YRVGKKIGEG…LRSLFDSLLL (272 aa)) folds into the Protein kinase domain. Residues 21–29 (IGEGSFGML) and Lys44 each bind ATP. Catalysis depends on Asp134, which acts as the Proton acceptor. The disordered stretch occupies residues 366–426 (DGIPGKAASP…PSKEKSRKKF (61 aa)). Residues 372–413 (AASPQVQQQQQTSSAQQQQPQRVEQPAPQTTQPTQVDTQQAA) show a composition bias toward low complexity.

It belongs to the protein kinase superfamily. CK1 Ser/Thr protein kinase family. Casein kinase I subfamily.

The protein localises to the cytoplasm. It catalyses the reaction L-seryl-[protein] + ATP = O-phospho-L-seryl-[protein] + ADP + H(+). The enzyme catalyses L-threonyl-[protein] + ATP = O-phospho-L-threonyl-[protein] + ADP + H(+). In terms of biological role, casein kinases are operationally defined by their preferential utilization of acidic proteins such as caseins as substrates. The chain is Casein kinase I homolog 3 (cki3) from Schizosaccharomyces pombe (strain 972 / ATCC 24843) (Fission yeast).